The primary structure comprises 617 residues: Actin-binding protein (617 aa).

One can recognise an ADF-H domain in the interval 7–136 (DATTHSRDIE…DEEELLTKIS (130 aa)). 2 disordered regions span residues 169-223 (PSLA…LSDN) and 325-574 (AEKK…GEDN). Residues 202 to 211 (ADDWDEPEIK) form a 1-1 repeat. The interval 202–600 (ADDWDEPEIK…DDDWWLGELE (399 aa)) is 3 X 10 AA approximate repeats. 2 stretches are compositionally biased toward basic and acidic residues: residues 340 to 351 (EEQKPVETKTEI) and 359 to 375 (DEMK…KLGA). A compositionally biased stretch (polar residues) spans 400–411 (TFGQPAANSKPA). Composition is skewed to acidic residues over residues 437 to 453 (EHEE…DEDE), 483 to 502 (EPVE…EEEA), and 516 to 530 (PEPE…EEEA). Tandem repeats lie at residues 444–453 (DDDWGEDEDE), 495–510 (EEEE…LPSR), 523–538 (EEEE…LPSR), and 591–600 (DDDWWLGELE). Residues 495–538 (EEEEEEEAPAPSLPSRNAAPEPEPEQPQEEEEEEEAPAPSLPSR) are 2 X 16 AA repeats of E(7)-A-P-A-P-S-L-P-S-R. In terms of domain architecture, SH3 spans 557 to 617 (AEAPWATAEY…FPSNYVVLGN (61 aa)).

The protein localises to the cytoplasm. The protein resides in the cytoskeleton. Functionally, may be involved in the spatial organization of cell surface growth. An overproduction of ABP1 causes the assembly of the cortical actin skeleton at inappropriate sites on the cell surface, resulting in delocalized surface growth. This chain is Actin-binding protein (ABP1), found in Maudiozyma exigua (Yeast).